Here is a 362-residue protein sequence, read N- to C-terminus: Peptide chain release factor 1 (362 aa).

Glutamine 240 is subject to N5-methylglutamine.

It belongs to the prokaryotic/mitochondrial release factor family. Methylated by PrmC. Methylation increases the termination efficiency of RF1.

It is found in the cytoplasm. Functionally, peptide chain release factor 1 directs the termination of translation in response to the peptide chain termination codons UAG and UAA. The protein is Peptide chain release factor 1 of Bifidobacterium longum (strain NCC 2705).